Reading from the N-terminus, the 477-residue chain is 3-isopropylmalate dehydratase large subunit (477 aa).

Residues cysteine 347, cysteine 407, and cysteine 410 each contribute to the [4Fe-4S] cluster site. The disordered stretch occupies residues 418–442 (LAPGERSASTSNRNFEGRQGKGGRT).

Belongs to the aconitase/IPM isomerase family. LeuC type 1 subfamily. As to quaternary structure, heterodimer of LeuC and LeuD. [4Fe-4S] cluster is required as a cofactor.

The catalysed reaction is (2R,3S)-3-isopropylmalate = (2S)-2-isopropylmalate. Its pathway is amino-acid biosynthesis; L-leucine biosynthesis; L-leucine from 3-methyl-2-oxobutanoate: step 2/4. Catalyzes the isomerization between 2-isopropylmalate and 3-isopropylmalate, via the formation of 2-isopropylmaleate. In Streptomyces avermitilis (strain ATCC 31267 / DSM 46492 / JCM 5070 / NBRC 14893 / NCIMB 12804 / NRRL 8165 / MA-4680), this protein is 3-isopropylmalate dehydratase large subunit.